Here is a 1576-residue protein sequence, read N- to C-terminus: Disco-interacting protein 2 homolog B (1576 aa).

Residues Ser9, Ser50, and Ser53 each carry the phosphoserine modification. The 120-residue stretch at 12-131 (AVAALPPEVR…PMPTKRRSTF (120 aa)) folds into the DMAP1-binding domain. A disordered region spans residues 31 to 167 (LSEGDITQKG…AALSAALQQS (137 aa)). Positions 52–62 (YSPQTQETDSA) are enriched in polar residues. Positions 70–83 (QTPAPSAAQTSAPS) are enriched in low complexity. Thr71 bears the Phosphothreonine mark. Over residues 92–104 (GARDERYRSDIHT) the composition is skewed to basic and acidic residues. Position 100 is a phosphoserine (Ser100). Residue Thr140 is modified to Phosphothreonine. A phosphoserine mark is found at Ser146, Ser148, and Ser153. Low complexity predominate over residues 155-167 (RRQAALSAALQQS). Ser178, Ser193, and Ser203 each carry phosphoserine. A disordered region spans residues 179-201 (IQGSSTSSSASSTLSHGEVKGTS). The segment covering 182–193 (SSTSSSASSTLS) has biased composition (low complexity). The interval 217–246 (SAPPDVTTTTSSSSSSSSIRPANIDLPPSG) is disordered. Over residues 223–234 (TTTTSSSSSSSS) the composition is skewed to low complexity. A Phosphoserine modification is found at Ser259.

This sequence belongs to the DIP2 family. As to quaternary structure, interacts with alpha-tubulin. Moderately expressed in adult brain, placenta, skeletal muscle, heart, kidney, pancreas, lung, spleen and colon. Expression was weaker in adult liver, kidney, spleen, and ovary, and in fetal brain and liver. In the brain, it is expressed in the cerebral cortex; the frontal, parietal, occipital and temporal lobes; the paracentral gyrus; the pons; the corpus callosum and the hippocampus. Highest expression levels in the brain were found in the cerebral cortex and the frontal and parietal lobes.

It localises to the cell projection. Its subcellular location is the dendrite. It is found in the axon. The protein localises to the perikaryon. In terms of biological role, negatively regulates axonal outgrowth and is essential for normal synaptic transmission. Not required for regulation of axon polarity. Promotes acetylation of alpha-tubulin. This is Disco-interacting protein 2 homolog B (DIP2B) from Homo sapiens (Human).